A 252-amino-acid polypeptide reads, in one-letter code: Chaperone protein AggD (252 aa).

The N-terminal stretch at 1 to 22 (MKIRRIVSTIAIALSVFTFAHA) is a signal peptide.

This sequence belongs to the periplasmic pilus chaperone family.

The protein localises to the periplasm. In terms of biological role, involved in the biogenesis of the AAF/I fimbriae. The chain is Chaperone protein AggD (aggD) from Escherichia coli.